The primary structure comprises 262 residues: Polyamine aminopropyltransferase (262 aa).

A PABS domain is found at 1 to 249; the sequence is MWITQEITPY…DIHRAAFALP (249 aa). Asparagine 29 lines the S-methyl-5'-thioadenosine pocket. Spermidine is bound at residue aspartate 83. Residue aspartate 155 is the Proton acceptor of the active site.

Belongs to the spermidine/spermine synthase family. In terms of assembly, homodimer or homotetramer.

It is found in the cytoplasm. It carries out the reaction S-adenosyl 3-(methylsulfanyl)propylamine + putrescine = S-methyl-5'-thioadenosine + spermidine + H(+). It functions in the pathway amine and polyamine biosynthesis; spermidine biosynthesis; spermidine from putrescine: step 1/1. Catalyzes the irreversible transfer of a propylamine group from the amino donor S-adenosylmethioninamine (decarboxy-AdoMet) to putrescine (1,4-diaminobutane) to yield spermidine. This Helicobacter pylori (strain HPAG1) protein is Polyamine aminopropyltransferase.